A 1308-amino-acid polypeptide reads, in one-letter code: MLSTMCFLWDTECPLYVYFCFFIIVLIVWQVRQNYQGLKCENRRSCCRRHQKVRQRAKDAASRARRLSREEDEKPCELLSIMKSQSWVPKQGNVRQLLCLDPSCQICEATTLEIRQLLQSKKSQISPALLGLPQRAACLEMPISSESFEWNQDFYSRYSTNSPVVPGNQTLTQLTEELTESTNADGVLLCWTDPLQIGQEFHLADMPMASETLVSPGLEEPVVLMNEEDTVHSNLNYIQQLQDHEALNSQIPFQTLTPQLTVTHPMAVSIVTDAPQPFLSPEVLRLLEIHVKKLMHFQRWGLPRRVEESLKQFMPNPPVYLPPEHNQPVSFILNTSSQDCVHRFEGISPETWYSYMDGQPIQTFWVSEWSSGDQGQRLSCKPIPSPVEKPLLTPDYELLHDLCLSPEGQVDGSQSNLQKKFTQLFCGLPSMHSESLGSTFLCTQGVSKNTLKPPYKEPHFLKVSPPIPLPEAAPPPSSTSPNESLDEPQRAQIGGVPFLTLSECKTLEWHLLQRQLQLQWGLPAVIARPPRVQSHTQYKHKPWNKAKPRETLKFFGPGKPFSALTRELFFIPQHARRLLEFHLQKRLIHLRWGLPQRIQRSINMLLSSTDLQSLPCGGSRLPNVSISQPGKPEAYGSGDTFLPTAGKGTTPMPHLFAKAQEMLKSHDTKCEQIREGKVPACVQSAWKGRIPGDLAAGTLFPNIPQGQPLELQAENNPDLHQEAVSWKPMDLDQEAQAFSGVFIEHCRRPQALSEETIKKLETTLRHKYLAFLSGLQALYCMAPTKATSPTVDQSVITTMPWSVKSPQKPLSQKSPLEALCLSGLEPCTQDDKETSANIAEEFQHGAQGHGRTEKVPPERQPLLNRPYSLDTEIMERVSFYLKRKALDIKLGISLKESVFQEPTATDLESESVQEPLGSPRESTLLQGPPTLCHVPVAPDPDKVCLKQPATAVQVVFQEQNQPSSRAVPHRSARQGSQVHRNMMEAQVHYVQMGTGGEMLNLGEPFSTESQSPGKSKSGYVPTVAGKRKIPGKPKVVGDLGEGDAGLGFSLVSLKTRQDGEQEKRLLHRQLQGSSLQAQTFHLEGACPHSPQESPELQFADPPPEVFMETDSEQDMEDSQSKESIVPEPARTAKAPQPMLSRASQGLPFPRSPTQRKPSQGQPGPGHVPPGHATPASPYTRPSRLPEAGLKNKMKLFFHSIKLKMKSKAHTEPSTVSTPGKVAKTSKENIDRGLPQAKSPTKKTKPEDFRGPKAQFSVVGPCLTPSYILDSKFWPRPRRVGSVSVLGHSYHCPRHCPRLAYANQQRNPP.

A helical transmembrane segment spans residues 7–27; that stretch reads FLWDTECPLYVYFCFFIIVLI. 7 disordered regions span residues 464–488, 627–648, 844–863, 902–927, 1005–1026, 1084–1190, and 1204–1254; these read SPPIPLPEAAPPPSSTSPNESLDEP, SQPGKPEAYGSGDTFLPTAGKG, HGAQGHGRTEKVPPERQPLL, PTATDLESESVQEPLGSPRESTLLQG, FSTESQSPGKSKSGYVPTVAGK, GACP…AGLK, and MKSK…PKAQ. Positions 465–478 are enriched in pro residues; sequence PPIPLPEAAPPPSS. Over residues 1107-1117 the composition is skewed to acidic residues; that stretch reads METDSEQDMED.

This sequence belongs to the SPATA31 family.

It is found in the membrane. This chain is Spermatogenesis-associated protein 31F1B, found in Mus musculus (Mouse).